Reading from the N-terminus, the 118-residue chain is Appetite-regulating hormone (118 aa).

Residues 1–24 (MPSTGTICSLLLLSVLLMADLAMA) form the signal peptide. Ser-27 carries the O-decanoyl serine; alternate lipid modification. Ser-27 is lipidated: O-hexanoyl serine; alternate. Ser-27 carries the O-octanoyl serine; alternate lipid modification. Positions 29–50 (LSPEHQKVQQRKESKKPAAKLK) are disordered. Residues 32–44 (EHQKVQQRKESKK) show a composition bias toward basic and acidic residues. The propeptide at 53 to 76 (ALEGWLGPEDSGEVEGTEDKLEIR) is removed in mature form. The residue at position 99 (Leu-99) is a Leucine amide. A propeptide spans 100-118 (GKFLQDILWEEVTEAPADK) (removed in mature form).

It belongs to the motilin family. In terms of processing, O-octanoylated by GOAT/MBOAT4. O-octanoylation is essential for ghrelin activity. Post-translationally, amidation of Leu-99 is essential for obestatin activity.

It is found in the secreted. Its function is as follows. Ghrelin is the ligand for growth hormone secretagogue receptor type 1 (GHSR). Induces the release of growth hormone from the pituitary. Has an appetite-stimulating effect, induces adiposity and stimulates gastric acid secretion. Involved in growth regulation. Obestatin may be the ligand for GPR39. May have an appetite-reducing effect resulting in decreased food intake. May reduce gastric emptying activity and jejunal motility. In Sus scrofa (Pig), this protein is Appetite-regulating hormone (GHRL).